The sequence spans 197 residues: Peptidyl-tRNA hydrolase (197 aa).

A tRNA-binding site is contributed by Tyr-21. The Proton acceptor role is filled by His-26. TRNA-binding residues include Tyr-72, Asn-74, and Asn-120.

This sequence belongs to the PTH family. Monomer.

It localises to the cytoplasm. It catalyses the reaction an N-acyl-L-alpha-aminoacyl-tRNA + H2O = an N-acyl-L-amino acid + a tRNA + H(+). Hydrolyzes ribosome-free peptidyl-tRNAs (with 1 or more amino acids incorporated), which drop off the ribosome during protein synthesis, or as a result of ribosome stalling. In terms of biological role, catalyzes the release of premature peptidyl moieties from peptidyl-tRNA molecules trapped in stalled 50S ribosomal subunits, and thus maintains levels of free tRNAs and 50S ribosomes. This chain is Peptidyl-tRNA hydrolase, found in Saccharophagus degradans (strain 2-40 / ATCC 43961 / DSM 17024).